Here is a 293-residue protein sequence, read N- to C-terminus: Elongation factor Ts (293 aa).

The involved in Mg(2+) ion dislocation from EF-Tu stretch occupies residues 79–82 (TDFV).

Belongs to the EF-Ts family.

The protein localises to the cytoplasm. Associates with the EF-Tu.GDP complex and induces the exchange of GDP to GTP. It remains bound to the aminoacyl-tRNA.EF-Tu.GTP complex up to the GTP hydrolysis stage on the ribosome. The protein is Elongation factor Ts of Bacillus licheniformis (strain ATCC 14580 / DSM 13 / JCM 2505 / CCUG 7422 / NBRC 12200 / NCIMB 9375 / NCTC 10341 / NRRL NRS-1264 / Gibson 46).